Here is a 909-residue protein sequence, read N- to C-terminus: MRNPALSIDVDRPTSRHVRQNAHLLSDLLIEAITYLEGEEKAELVAKARKAASREDVVNGDAPLLDHLFSDLTTEQAVFLARAFASHSLLANIGEDVAGRRRHAEADAQPGDERPRTLIDAVKALKAAGKSDAELAKIFAAMNVVPVLTAHPTEVRRRSMVDRETEISRLMALRRHHLPPDLEAEIRESLFREIALMWRTRLYRPERITVKDEIRNALSIVRTSILPAIIDLYGDWTGKIGQHGQLAPLLKMGSWLGGDRDGHPGVNGQTLKLALSSQSRVILDWYAGEVRKLWSNLAVSTAYTPVSDELLALAAQAKDPSVHRIDEPYRLALELIFDRLTAVSQKLTGAPVAFASGVTSVEPYAHPDAFVADLSVIIDSLERNGGERLVGSALRTLVEVAKACGFHLMSLDLRQNADVHERTLDELFRRAGTGVEYLKLDEDARCKVLIDELSHQRPLVSPFTAYGEETSKELATMEAAAQAVRDYGHGCLGAYIISKSATLSDMLEPLVLLKQVGLVWGGAAPRASVKVAPLFETIGDLENGPAVLRQWLELPLSRTILGDRPVQEIMLGYSDSNKDGGYVASRRGVATGASALAHEADRMGVGLQLFHGRGGSVGRGGGPAAEAVLAQPAGTVQGRIRMTEQGEMIARRFGDQPTARRNLDGLAAAVLMASERPIPKRDPKVEGAMTALAQSSFEGYRALVYDDAAFEDFFWSVTPISEIVGLNIGSRPASRTASRKIEDLRAIPWVFSWSQARFMLPGWYGFASGVERAGLSVEQLRDLAGNFDFFASLLSNMELALAQSQMGIAARYVALSPDKANAERIFATIRREHEAATGLALAIRGGAALLDNQPDLAESVALASRSVDPLNHLQLELLSRRRAGDIDEELRLAIQLTVAGIAAGLRNTG.

Active-site residues include His151 and Lys578.

The protein belongs to the PEPCase type 1 family. Requires Mg(2+) as cofactor.

It catalyses the reaction oxaloacetate + phosphate = phosphoenolpyruvate + hydrogencarbonate. Its function is as follows. Forms oxaloacetate, a four-carbon dicarboxylic acid source for the tricarboxylic acid cycle. This chain is Phosphoenolpyruvate carboxylase, found in Caulobacter vibrioides (strain ATCC 19089 / CIP 103742 / CB 15) (Caulobacter crescentus).